The following is a 235-amino-acid chain: Ubiquinone/menaquinone biosynthesis C-methyltransferase UbiE (235 aa).

S-adenosyl-L-methionine-binding residues include threonine 60 and aspartate 81.

It belongs to the class I-like SAM-binding methyltransferase superfamily. MenG/UbiE family.

It carries out the reaction a 2-demethylmenaquinol + S-adenosyl-L-methionine = a menaquinol + S-adenosyl-L-homocysteine + H(+). It catalyses the reaction a 2-methoxy-6-(all-trans-polyprenyl)benzene-1,4-diol + S-adenosyl-L-methionine = a 5-methoxy-2-methyl-3-(all-trans-polyprenyl)benzene-1,4-diol + S-adenosyl-L-homocysteine + H(+). It participates in quinol/quinone metabolism; menaquinone biosynthesis; menaquinol from 1,4-dihydroxy-2-naphthoate: step 2/2. It functions in the pathway cofactor biosynthesis; ubiquinone biosynthesis. In terms of biological role, methyltransferase required for the conversion of demethylmenaquinol (DMKH2) to menaquinol (MKH2) and the conversion of 2-polyprenyl-6-methoxy-1,4-benzoquinol (DDMQH2) to 2-polyprenyl-3-methyl-6-methoxy-1,4-benzoquinol (DMQH2). This Geotalea daltonii (strain DSM 22248 / JCM 15807 / FRC-32) (Geobacter daltonii) protein is Ubiquinone/menaquinone biosynthesis C-methyltransferase UbiE.